A 156-amino-acid chain; its full sequence is Small ribosomal subunit protein uS7 (156 aa).

This sequence belongs to the universal ribosomal protein uS7 family. In terms of assembly, part of the 30S ribosomal subunit. Contacts proteins S9 and S11.

One of the primary rRNA binding proteins, it binds directly to 16S rRNA where it nucleates assembly of the head domain of the 30S subunit. Is located at the subunit interface close to the decoding center, probably blocks exit of the E-site tRNA. The chain is Small ribosomal subunit protein uS7 from Glaesserella parasuis serovar 5 (strain SH0165) (Haemophilus parasuis).